Consider the following 328-residue polypeptide: Stress response kinase A (328 aa).

The active-site Proton acceptor is Asp201. 2 residues coordinate Mg(2+): Asn206 and Asp217. Asp217 is a catalytic residue.

It belongs to the SrkA/RdoA protein kinase family. Monomer. It depends on Mg(2+) as a cofactor.

The protein resides in the cytoplasm. It catalyses the reaction L-seryl-[protein] + ATP = O-phospho-L-seryl-[protein] + ADP + H(+). The enzyme catalyses L-threonyl-[protein] + ATP = O-phospho-L-threonyl-[protein] + ADP + H(+). A protein kinase that phosphorylates Ser and Thr residues. Probably acts to suppress the effects of stress linked to accumulation of reactive oxygen species. Probably involved in the extracytoplasmic stress response. The polypeptide is Stress response kinase A (Salmonella paratyphi A (strain ATCC 9150 / SARB42)).